An 853-amino-acid polypeptide reads, in one-letter code: DNA mismatch repair protein MutS (853 aa).

613–620 (GPNMGGKS) serves as a coordination point for ATP.

It belongs to the DNA mismatch repair MutS family.

This protein is involved in the repair of mismatches in DNA. It is possible that it carries out the mismatch recognition step. This protein has a weak ATPase activity. The sequence is that of DNA mismatch repair protein MutS from Vibrio parahaemolyticus serotype O3:K6 (strain RIMD 2210633).